A 304-amino-acid chain; its full sequence is Olfactory receptor 52A4 (304 aa).

At 1–32 the chain is on the extracellular side; it reads MALPITNGTLFMPFVLTFIGIPGFESVQCWIG. An N-linked (GlcNAc...) asparagine glycan is attached at Asn-7. Residues 33 to 53 traverse the membrane as a helical segment; sequence IPFCATYVIALIGNSLLLIII. Over 54 to 61 the chain is Cytoplasmic; the sequence is KSEPSLHE. A helical membrane pass occupies residues 62-82; that stretch reads PMYIFLATLGATDISLSTSIV. At 83-103 the chain is on the extracellular side; it reads PKMLDIFWFHLPEIYFDACLF. A disulfide bridge links Cys-101 with Cys-184. A helical transmembrane segment spans residues 104 to 124; it reads QMWLIHTFQGIESGVLLAMAL. The Cytoplasmic segment spans residues 125-146; it reads DRCVAICYPLRRAIVFTRQLVT. The helical transmembrane segment at 147 to 167 threads the bilayer; it reads YIVVGVTLRPAILVIPCLLLI. Residues 168 to 203 are Extracellular-facing; that stretch reads KCHLKLYRTKLIYHTYCERVALVKLATEDVYINKVY. A helical transmembrane segment spans residues 204-224; that stretch reads GILGAFIVGGLDFIFITLSYI. The Cytoplasmic segment spans residues 225–255; that stretch reads QIFITVFHLPLKEARLKVFNTCIPHIYVFFQ. The helical transmembrane segment at 256 to 276 threads the bilayer; sequence FYLLAFFFIFYSQIWILYPII. Over 277-279 the chain is Extracellular; sequence CTY. A helical membrane pass occupies residues 280–300; the sequence is HLVQSLPTGPTIPQPLYLWVK. Residues 301–304 lie on the Cytoplasmic side of the membrane; the sequence is DQTH.

This sequence belongs to the G-protein coupled receptor 1 family.

The protein resides in the cell membrane. Odorant receptor. The polypeptide is Olfactory receptor 52A4 (Homo sapiens (Human)).